The following is a 289-amino-acid chain: Cysteine-rich venom protein Mr30 (289 aa).

The first 24 residues, 1 to 24, serve as a signal peptide directing secretion; that stretch reads MLSTMQTVGAILMLSIVFVAGTKR. E33 is modified (4-carboxyglutamate). The SCP domain maps to 62–184; sequence VRMHNVIRAT…GEDRYFVCNY (123 aa).

It belongs to the CRISP family. In terms of processing, contains 11 disulfide bonds. In terms of tissue distribution, expressed by the venom duct.

It is found in the secreted. Functionally, has no proteolytic activity. This is Cysteine-rich venom protein Mr30 from Conus marmoreus (Marble cone).